We begin with the raw amino-acid sequence, 449 residues long: Phosphoglucosamine mutase (449 aa).

Catalysis depends on Ser-101, which acts as the Phosphoserine intermediate. Positions 101, 241, 243, and 245 each coordinate Mg(2+). Ser-101 is subject to Phosphoserine.

This sequence belongs to the phosphohexose mutase family. It depends on Mg(2+) as a cofactor. Activated by phosphorylation.

The enzyme catalyses alpha-D-glucosamine 1-phosphate = D-glucosamine 6-phosphate. Catalyzes the conversion of glucosamine-6-phosphate to glucosamine-1-phosphate. This Alkaliphilus oremlandii (strain OhILAs) (Clostridium oremlandii (strain OhILAs)) protein is Phosphoglucosamine mutase.